A 415-amino-acid polypeptide reads, in one-letter code: Imidazolonepropionase (415 aa).

2 residues coordinate Fe(3+): histidine 83 and histidine 85. The Zn(2+) site is built by histidine 83 and histidine 85. Residues arginine 92, tyrosine 155, and histidine 188 each coordinate 4-imidazolone-5-propanoate. Tyrosine 155 is a binding site for N-formimidoyl-L-glutamate. Histidine 250 contacts Fe(3+). Histidine 250 is a binding site for Zn(2+). Glutamine 253 serves as a coordination point for 4-imidazolone-5-propanoate. Fe(3+) is bound at residue aspartate 324. Zn(2+) is bound at residue aspartate 324. Residues asparagine 326 and glycine 328 each contribute to the N-formimidoyl-L-glutamate site. Serine 329 is a binding site for 4-imidazolone-5-propanoate.

It belongs to the metallo-dependent hydrolases superfamily. HutI family. The cofactor is Zn(2+). Requires Fe(3+) as cofactor.

The protein localises to the cytoplasm. The catalysed reaction is 4-imidazolone-5-propanoate + H2O = N-formimidoyl-L-glutamate. It functions in the pathway amino-acid degradation; L-histidine degradation into L-glutamate; N-formimidoyl-L-glutamate from L-histidine: step 3/3. Catalyzes the hydrolytic cleavage of the carbon-nitrogen bond in imidazolone-5-propanoate to yield N-formimidoyl-L-glutamate. It is the third step in the universal histidine degradation pathway. The chain is Imidazolonepropionase from Rubrobacter xylanophilus (strain DSM 9941 / JCM 11954 / NBRC 16129 / PRD-1).